The chain runs to 427 residues: UDP-N-acetylglucosamine 1-carboxyvinyltransferase 1 (427 aa).

23-24 (KN) serves as a coordination point for phosphoenolpyruvate. Arg-96 is a binding site for UDP-N-acetyl-alpha-D-glucosamine. Cys-120 serves as the catalytic Proton donor. The residue at position 120 (Cys-120) is a 2-(S-cysteinyl)pyruvic acid O-phosphothioketal. UDP-N-acetyl-alpha-D-glucosamine-binding positions include 125–129 (RPIDL), Asp-309, and Val-331.

Belongs to the EPSP synthase family. MurA subfamily.

Its subcellular location is the cytoplasm. It carries out the reaction phosphoenolpyruvate + UDP-N-acetyl-alpha-D-glucosamine = UDP-N-acetyl-3-O-(1-carboxyvinyl)-alpha-D-glucosamine + phosphate. Its pathway is cell wall biogenesis; peptidoglycan biosynthesis. Its function is as follows. Cell wall formation. Adds enolpyruvyl to UDP-N-acetylglucosamine. This chain is UDP-N-acetylglucosamine 1-carboxyvinyltransferase 1, found in Streptococcus pneumoniae (strain ATCC BAA-255 / R6).